A 217-amino-acid chain; its full sequence is Meiotically up-regulated gene 37 protein (217 aa).

Functionally, has a role in meiosis. This is Meiotically up-regulated gene 37 protein (mug37) from Schizosaccharomyces pombe (strain 972 / ATCC 24843) (Fission yeast).